The following is a 131-amino-acid chain: D-ribose pyranase (131 aa).

His-20 (proton donor) is an active-site residue. Substrate-binding positions include Asp-28, His-98, and 120 to 122 (YSN).

The protein belongs to the RbsD / FucU family. RbsD subfamily. In terms of assembly, homodecamer.

Its subcellular location is the cytoplasm. The enzyme catalyses beta-D-ribopyranose = beta-D-ribofuranose. It participates in carbohydrate metabolism; D-ribose degradation; D-ribose 5-phosphate from beta-D-ribopyranose: step 1/2. Functionally, catalyzes the interconversion of beta-pyran and beta-furan forms of D-ribose. This chain is D-ribose pyranase, found in Lactiplantibacillus plantarum (strain ATCC BAA-793 / NCIMB 8826 / WCFS1) (Lactobacillus plantarum).